Here is a 571-residue protein sequence, read N- to C-terminus: Proline--tRNA ligase (571 aa).

This sequence belongs to the class-II aminoacyl-tRNA synthetase family. ProS type 1 subfamily. Homodimer.

It localises to the cytoplasm. The enzyme catalyses tRNA(Pro) + L-proline + ATP = L-prolyl-tRNA(Pro) + AMP + diphosphate. Its function is as follows. Catalyzes the attachment of proline to tRNA(Pro) in a two-step reaction: proline is first activated by ATP to form Pro-AMP and then transferred to the acceptor end of tRNA(Pro). As ProRS can inadvertently accommodate and process non-cognate amino acids such as alanine and cysteine, to avoid such errors it has two additional distinct editing activities against alanine. One activity is designated as 'pretransfer' editing and involves the tRNA(Pro)-independent hydrolysis of activated Ala-AMP. The other activity is designated 'posttransfer' editing and involves deacylation of mischarged Ala-tRNA(Pro). The misacylated Cys-tRNA(Pro) is not edited by ProRS. In Pseudomonas fluorescens (strain Pf0-1), this protein is Proline--tRNA ligase.